The primary structure comprises 213 residues: Pyridoxine/pyridoxamine 5'-phosphate oxidase (213 aa).

Substrate is bound by residues 10-13 and K68; that span reads REEY. FMN contacts are provided by residues 63–68, 78–79, K85, and Q107; these read RMLLLK and FT. The substrate site is built by Y125, R129, and S133. FMN-binding positions include 142–143 and W186; that span reads QS. 192–194 contributes to the substrate binding site; sequence RLH. Residue R196 participates in FMN binding.

The protein belongs to the pyridoxamine 5'-phosphate oxidase family. As to quaternary structure, homodimer. The cofactor is FMN.

The enzyme catalyses pyridoxamine 5'-phosphate + O2 + H2O = pyridoxal 5'-phosphate + H2O2 + NH4(+). It carries out the reaction pyridoxine 5'-phosphate + O2 = pyridoxal 5'-phosphate + H2O2. The protein operates within cofactor metabolism; pyridoxal 5'-phosphate salvage; pyridoxal 5'-phosphate from pyridoxamine 5'-phosphate: step 1/1. It participates in cofactor metabolism; pyridoxal 5'-phosphate salvage; pyridoxal 5'-phosphate from pyridoxine 5'-phosphate: step 1/1. Functionally, catalyzes the oxidation of either pyridoxine 5'-phosphate (PNP) or pyridoxamine 5'-phosphate (PMP) into pyridoxal 5'-phosphate (PLP). This Nocardioides sp. (strain ATCC BAA-499 / JS614) protein is Pyridoxine/pyridoxamine 5'-phosphate oxidase.